We begin with the raw amino-acid sequence, 190 residues long: dCTP deaminase, dUMP-forming (190 aa).

DCTP-binding positions include 101-106 (KSSLGR), Asp119, 127-129 (TLE), Gln148, Tyr162, Lys170, and Gln174. The Proton donor/acceptor role is filled by Glu129. A disordered region spans residues 160–190 (HPYGSSRAGSKYQGQRGPTPSRSCQNFIRST). Over residues 171–190 (YQGQRGPTPSRSCQNFIRST) the composition is skewed to polar residues.

This sequence belongs to the dCTP deaminase family. As to quaternary structure, homotrimer.

It carries out the reaction dCTP + 2 H2O = dUMP + NH4(+) + diphosphate. Its pathway is pyrimidine metabolism; dUMP biosynthesis; dUMP from dCTP: step 1/1. In terms of biological role, bifunctional enzyme that catalyzes both the deamination of dCTP to dUTP and the hydrolysis of dUTP to dUMP without releasing the toxic dUTP intermediate. The polypeptide is dCTP deaminase, dUMP-forming (Mycobacterium bovis (strain ATCC BAA-935 / AF2122/97)).